A 637-amino-acid chain; its full sequence is Chaperone protein DnaK (637 aa).

Residue T203 is modified to Phosphothreonine; by autocatalysis. The segment at 600–637 (SAVYGQQQEQGAPAQEEPSAEGKKNDDEGTVEGEFREV) is disordered. The segment covering 604 to 616 (GQQQEQGAPAQEE) has biased composition (low complexity). Basic and acidic residues predominate over residues 619–637 (AEGKKNDDEGTVEGEFREV).

The protein belongs to the heat shock protein 70 family.

Functionally, acts as a chaperone. This Dehalococcoides mccartyi (strain ATCC BAA-2266 / KCTC 15142 / 195) (Dehalococcoides ethenogenes (strain 195)) protein is Chaperone protein DnaK.